The sequence spans 514 residues: Intracellular exo-alpha-L-arabinofuranosidase (514 aa).

Positions 47 and 194 each coordinate alpha-L-arabinofuranose. Glu195 serves as the catalytic Proton donor/acceptor. Alpha-L-arabinofuranose is bound by residues Tyr261, Glu317, and Gln366. Glu317 serves as the catalytic Nucleophile.

It belongs to the glycosyl hydrolase 51 family. Homohexamer; trimer of dimers.

Its subcellular location is the cytoplasm. It catalyses the reaction Hydrolysis of terminal non-reducing alpha-L-arabinofuranoside residues in alpha-L-arabinosides.. Its pathway is glycan metabolism; L-arabinan degradation. Its function is as follows. Involved in the degradation of arabinan and is a key enzyme in the complete degradation of the plant cell wall. Catalyzes the cleavage of terminal alpha-L-arabinofuranosyl residues in different hemicellulosic homopolysaccharides (branched and debranched arabinans) and heteropolysaccharides (arabinoxylans). The chain is Intracellular exo-alpha-L-arabinofuranosidase (asdII) from Bacteroides ovatus.